The sequence spans 847 residues: Guanine nucleotide exchange factor VAV3 (847 aa).

The Calponin-homology (CH) domain maps to 1–119 (MEPWKQCAQW…ETLSRLSRTP (119 aa)). The residue at position 141 (Tyr141) is a Phosphotyrosine. Residues 192-371 (IRSCCLAEIR…KDLAQYVNEV (180 aa)) form the DH domain. One can recognise a PH domain in the interval 400 to 502 (RPQGDGEIRI…WLEQFEMALS (103 aa)). Residues 513-562 (FHDFKMHTFTRVTSCRVCQMLLRGTFYQGYLCFKCGAKAHKECLGRVDNC) form a Phorbol-ester/DAG-type zinc finger. The tract at residues 560–847 (DNCGRVNSVE…FPSTYVEEDE (288 aa)) is sufficient for interaction with ROS1. Residues 592–660 (PGLPKMQVIR…PSDAVKPSPC (69 aa)) form the SH3 1 domain. An SH2 domain is found at 672–766 (WYAGPMERLQ…TLDTTLQFPY (95 aa)). Residues 788-847 (KVLGIAIARYDFCARDMRELSLLKGDMVKIYTKMSANGWWRGEVNGRVGWFPSTYVEEDE) enclose the SH3 2 domain.

As to quaternary structure, interacts with the PH domain of APS. Interacts with ROS1; constitutive interaction that mediates VAV3 phosphorylation. Interacts (via SH2 domains) with the phosphorylated form of EPHA2. Phosphorylated. Phosphorylation can be mediated by ROS1. In osteoclasts, undergoes tyrosine phosphorylation in response to CSF1. Abundantly expressed in osteoclasts and mature osteoblasts. Also expressed in bone marrow macrophages (at protein level):.

Its function is as follows. Exchange factor for GTP-binding proteins RhoA, RhoG and, to a lesser extent, Rac1. Binds physically to the nucleotide-free states of those GTPases. Plays an important role in angiogenesis. Its recruitment by phosphorylated EPHA2 is critical for EFNA1-induced RAC1 GTPase activation and vascular endothelial cell migration and assembly. May be important for integrin-mediated signaling, at least in some cell types. In osteoclasts, along with SYK tyrosine kinase, required for signaling through integrin alpha-v/beta-1 (ITAGV-ITGB1), a crucial event for osteoclast proper cytoskeleton organization and function. This signaling pathway involves RAC1, but not RHO, activation. Necessary for proper wound healing. In the course of wound healing, required for the phagocytotic cup formation preceding macrophage phagocytosis of apoptotic neutrophils. Responsible for integrin beta-2-mediated macrophage adhesion and, to a lesser extent, contributes to beta-3-mediated adhesion. Does not affect integrin beta-1-mediated adhesion. The protein is Guanine nucleotide exchange factor VAV3 (Vav3) of Mus musculus (Mouse).